The chain runs to 447 residues: ATP-dependent protease ATPase subunit HslU (447 aa).

ATP is bound by residues Ile-18, 60-65, Asp-259, Glu-325, and Arg-397; that span reads GVGKTE.

The protein belongs to the ClpX chaperone family. HslU subfamily. A double ring-shaped homohexamer of HslV is capped on each side by a ring-shaped HslU homohexamer. The assembly of the HslU/HslV complex is dependent on binding of ATP.

The protein localises to the cytoplasm. Functionally, ATPase subunit of a proteasome-like degradation complex; this subunit has chaperone activity. The binding of ATP and its subsequent hydrolysis by HslU are essential for unfolding of protein substrates subsequently hydrolyzed by HslV. HslU recognizes the N-terminal part of its protein substrates and unfolds these before they are guided to HslV for hydrolysis. The polypeptide is ATP-dependent protease ATPase subunit HslU (Burkholderia lata (strain ATCC 17760 / DSM 23089 / LMG 22485 / NCIMB 9086 / R18194 / 383)).